The primary structure comprises 214 residues: Histidine biosynthesis bifunctional protein HisIE (214 aa).

Residues 1 to 125 (MPATALSLPL…ESIEPPPADT (125 aa)) are phosphoribosyl-AMP cyclohydrolase. The interval 126 to 214 (LSQVYNIVCQ…VYEQLQLRRR (89 aa)) is phosphoribosyl-ATP pyrophosphohydrolase.

The protein in the N-terminal section; belongs to the PRA-CH family. This sequence in the C-terminal section; belongs to the PRA-PH family.

The protein localises to the cytoplasm. The catalysed reaction is 1-(5-phospho-beta-D-ribosyl)-ATP + H2O = 1-(5-phospho-beta-D-ribosyl)-5'-AMP + diphosphate + H(+). The enzyme catalyses 1-(5-phospho-beta-D-ribosyl)-5'-AMP + H2O = 1-(5-phospho-beta-D-ribosyl)-5-[(5-phospho-beta-D-ribosylamino)methylideneamino]imidazole-4-carboxamide. The protein operates within amino-acid biosynthesis; L-histidine biosynthesis; L-histidine from 5-phospho-alpha-D-ribose 1-diphosphate: step 2/9. It participates in amino-acid biosynthesis; L-histidine biosynthesis; L-histidine from 5-phospho-alpha-D-ribose 1-diphosphate: step 3/9. This is Histidine biosynthesis bifunctional protein HisIE from Thermosynechococcus vestitus (strain NIES-2133 / IAM M-273 / BP-1).